Reading from the N-terminus, the 500-residue chain is Putative glucokinase-2 (500 aa).

Position 2 is an N-acetylserine (serine 2). Phosphoserine is present on serine 2. In terms of domain architecture, Hexokinase spans 12–498; it reads EALEDAVVEI…SGVGAALCAL (487 aa). The segment at 74 to 217 is hexokinase small subdomain; it reads NGTERGVLLA…LSMINVVALT (144 aa). Residue lysine 110 coordinates ATP. The tract at residues 159-185 is glucose-binding; sequence KMGFTFSYPVDQTSLSSGTLIRWTKSF. Positions 218–487 are hexokinase large subdomain; it reads NDTVGTFLSH…RKIHLRLAKD (270 aa). A Phosphoserine modification is found at serine 470. An ATP-binding site is contributed by 487 to 492; that stretch reads DGSGVG.

It belongs to the hexokinase family.

The protein localises to the cytoplasm. The catalysed reaction is D-glucose + ATP = D-glucose 6-phosphate + ADP + H(+). It functions in the pathway carbohydrate degradation; glycolysis; D-glyceraldehyde 3-phosphate and glycerone phosphate from D-glucose: step 1/4. Putative glucokinase involved in phosphorylation of aldohexoses and glucose uptake. Involved in sporulation. Required for the full activation of the early meiotic inducer IME1. The chain is Putative glucokinase-2 (EMI2) from Saccharomyces cerevisiae (strain ATCC 204508 / S288c) (Baker's yeast).